The following is a 361-amino-acid chain: Chorismate synthase (361 aa).

Arg-47 contributes to the NADP(+) binding site. FMN is bound by residues 124–126 (RAS), Gly-286, 301–305 (KPTAT), and Arg-327.

The protein belongs to the chorismate synthase family. In terms of assembly, homotetramer. Requires FMNH2 as cofactor.

The enzyme catalyses 5-O-(1-carboxyvinyl)-3-phosphoshikimate = chorismate + phosphate. It functions in the pathway metabolic intermediate biosynthesis; chorismate biosynthesis; chorismate from D-erythrose 4-phosphate and phosphoenolpyruvate: step 7/7. Catalyzes the anti-1,4-elimination of the C-3 phosphate and the C-6 proR hydrogen from 5-enolpyruvylshikimate-3-phosphate (EPSP) to yield chorismate, which is the branch point compound that serves as the starting substrate for the three terminal pathways of aromatic amino acid biosynthesis. This reaction introduces a second double bond into the aromatic ring system. The chain is Chorismate synthase from Akkermansia muciniphila (strain ATCC BAA-835 / DSM 22959 / JCM 33894 / BCRC 81048 / CCUG 64013 / CIP 107961 / Muc).